The sequence spans 577 residues: Methionine--tRNA ligase (577 aa).

Positions 21-31 (PYANGPLHVGH) match the 'HIGH' region motif. Positions 153, 156, 166, and 169 each coordinate Zn(2+). Positions 355–359 (QMSTS) match the 'KMSKS' region motif. T358 contributes to the ATP binding site.

Belongs to the class-I aminoacyl-tRNA synthetase family. MetG type 1 subfamily. Monomer. It depends on Zn(2+) as a cofactor.

Its subcellular location is the cytoplasm. The catalysed reaction is tRNA(Met) + L-methionine + ATP = L-methionyl-tRNA(Met) + AMP + diphosphate. Is required not only for elongation of protein synthesis but also for the initiation of all mRNA translation through initiator tRNA(fMet) aminoacylation. In Rubrobacter xylanophilus (strain DSM 9941 / JCM 11954 / NBRC 16129 / PRD-1), this protein is Methionine--tRNA ligase.